Here is a 407-residue protein sequence, read N- to C-terminus: Probable tRNA sulfurtransferase (407 aa).

The 105-residue stretch at 61–165 (NEITYRLSKI…LDAIYMYEEV (105 aa)) folds into the THUMP domain. Residues 183 to 184 (ML), 208 to 209 (HF), Arg265, Gly287, and Gln296 each bind ATP.

This sequence belongs to the ThiI family.

Its subcellular location is the cytoplasm. The catalysed reaction is [ThiI sulfur-carrier protein]-S-sulfanyl-L-cysteine + a uridine in tRNA + 2 reduced [2Fe-2S]-[ferredoxin] + ATP + H(+) = [ThiI sulfur-carrier protein]-L-cysteine + a 4-thiouridine in tRNA + 2 oxidized [2Fe-2S]-[ferredoxin] + AMP + diphosphate. It catalyses the reaction [ThiS sulfur-carrier protein]-C-terminal Gly-Gly-AMP + S-sulfanyl-L-cysteinyl-[cysteine desulfurase] + AH2 = [ThiS sulfur-carrier protein]-C-terminal-Gly-aminoethanethioate + L-cysteinyl-[cysteine desulfurase] + A + AMP + 2 H(+). The protein operates within cofactor biosynthesis; thiamine diphosphate biosynthesis. Its function is as follows. Catalyzes the ATP-dependent transfer of a sulfur to tRNA to produce 4-thiouridine in position 8 of tRNAs, which functions as a near-UV photosensor. Also catalyzes the transfer of sulfur to the sulfur carrier protein ThiS, forming ThiS-thiocarboxylate. This is a step in the synthesis of thiazole, in the thiamine biosynthesis pathway. The sulfur is donated as persulfide by IscS. This chain is Probable tRNA sulfurtransferase, found in Staphylococcus aureus (strain Mu3 / ATCC 700698).